Consider the following 331-residue polypeptide: dTDP-glucose 4,6-dehydratase (331 aa).

Residues 11–12, 33–36, 57–58, 77–81, and serine 96 each bind NAD(+); these read FI, DALT, DI, and FAAET. Residue threonine 81 coordinates substrate. Threonine 120 contacts substrate. Residue aspartate 121 is the Proton donor of the active site. Active-site proton acceptor residues include glutamate 122 and tyrosine 147. Residue 147–151 participates in NAD(+) binding; the sequence is YSSTK. Position 176 (asparagine 176) interacts with substrate. Position 177 (asparagine 177) interacts with NAD(+). Substrate-binding positions include 186–191, 202–204, arginine 211, asparagine 246, and 269–273; these read KFIPRQ, KLY, and DRAGH.

The protein belongs to the NAD(P)-dependent epimerase/dehydratase family. dTDP-glucose dehydratase subfamily. As to quaternary structure, homodimer. NAD(+) is required as a cofactor.

It carries out the reaction dTDP-alpha-D-glucose = dTDP-4-dehydro-6-deoxy-alpha-D-glucose + H2O. It participates in carbohydrate biosynthesis; dTDP-L-rhamnose biosynthesis. Catalyzes the dehydration of dTDP-D-glucose to form dTDP-6-deoxy-D-xylo-4-hexulose via a three-step process involving oxidation, dehydration and reduction. Involved in the biosynthesis of the dTDP-L-rhamnose which is a component of the critical linker, D-N-acetylglucosamine-L-rhamnose disaccharide, which connects the galactan region of arabinogalactan to peptidoglycan via a phosphodiester linkage. This is dTDP-glucose 4,6-dehydratase (rmlB) from Mycolicibacterium smegmatis (strain ATCC 700084 / mc(2)155) (Mycobacterium smegmatis).